Here is a 207-residue protein sequence, read N- to C-terminus: MSTPSVHCLKPSPLHLPSGIPGSPGRQRRHTLPANEFRCLTPEDAAGVFEIEREAFISVSGNCPLNLDEVQHFLTLCPELSLGWFVEGRLVAFIIGSLWDEERLTQESLALHRPRGHSAHLHALAVHRSFRQQGKGSVLLWRYLHHVGAQPAVRRAVLMCEDALVPFYQRFGFHPAGPCAIVVGSLTFTEMHCSLRGHAALRRNSDR.

The disordered stretch occupies residues 1–29 (MSTPSVHCLKPSPLHLPSGIPGSPGRQRR). A YWHAZ-binding region spans residues 28 to 35 (RRHTLPAN). Threonine 31 carries the post-translational modification Phosphothreonine; by PKA. An N-acetyltransferase domain is found at 35–196 (NEFRCLTPED…TFTEMHCSLR (162 aa)). Leucine 124 provides a ligand contact to substrate. Acetyl-CoA is bound by residues 124 to 126 (LAV) and 132 to 137 (QQGKGS). Methionine 159 serves as a coordination point for substrate. 168–170 (YQR) serves as a coordination point for acetyl-CoA. Serine 205 carries the phosphoserine; by PKA modification.

Belongs to the acetyltransferase family. AANAT subfamily. In terms of assembly, monomer. Interacts with several 14-3-3 proteins, including YWHAB, YWHAE, YWHAG and YWHAZ, preferentially when phosphorylated at Thr-31. Phosphorylation on Ser-205 also allows binding to YWHAZ, but with a 10-fold lower affinity. The interaction with YWHAZ considerably increases affinity for arylalkylamines and acetyl-CoA and protects the enzyme from dephosphorylation and proteasomal degradation. It may also prevent thiol-dependent inactivation. The physiological stoichiometry of the interaction is not clear. In vitro studies show either 1:2 (i.e. 1 AANAT molecule per YWHAZ dimer) or 2:2. Post-translationally, cAMP-dependent phosphorylation on both N-terminal Thr-31 and C-terminal Ser-205 regulates AANAT activity by promoting interaction with 14-3-3 proteins. Highest expression in the pineal gland, followed by retina. Expressed at much lower levels in brainstem and pituitary gland. AANAT activity also detected at low levels in the olfactory lobe.

The protein resides in the cytoplasm. It carries out the reaction a 2-arylethylamine + acetyl-CoA = an N-acetyl-2-arylethylamine + CoA + H(+). It functions in the pathway aromatic compound metabolism; melatonin biosynthesis; melatonin from serotonin: step 1/2. Its function is as follows. Controls the night/day rhythm of melatonin production in the pineal gland. Catalyzes the N-acetylation of serotonin into N-acetylserotonin, the penultimate step in the synthesis of melatonin. This Ovis aries (Sheep) protein is Serotonin N-acetyltransferase (AANAT).